The following is a 42-amino-acid chain: KASYIHLRGSDLRPQFHQFTAVPHPNVKPMAYANALLQLGVM.

The segment at 38–42 (QLGVM) is required for autoinhibition.

Belongs to the PPP phosphatase family. PP-5 (PP-T) subfamily. In terms of assembly, probably forms a complex composed of chaperones HSP90 and HSP70, co-chaperones STIP1/HOP, CDC37, PPP5C, PTGES3/p23, TSC1 and client protein TSC2. Probably forms a complex composed of chaperones HSP90 and HSP70, co-chaperones CDC37, PPP5C, TSC1 and client protein TSC2, CDK4, AKT, RAF1 and NR3C1; this complex does not contain co-chaperones STIP1/HOP and PTGES3/p23. Part of a complex with HSP90/HSP90AA1 and steroid receptors. Interacts (via TPR repeats) with HSP90AA1 (via TPR repeat-binding motif) or HSPA1A/HSPA1B; the interaction is direct and activates the phosphatase activity. Dissociates from HSPA1A/HSPA1B and HSP90AA1 in response to arachidonic acid. Interacts with CPNE1 (via VWFA domain). Interacts with CDC16, CDC27. Interacts with KLHDC10 (via the 6 Kelch repeats); inhibits the phosphatase activity on MAP3K5. Interacts with ATM and ATR; both interactions are induced by DNA damage and enhance ATM and ATR kinase activity. Interacts with RAD17; reduced by DNA damage. Interacts with nuclear receptors such as NR3C1/GCR and PPARG (activated by agonist); regulates their transactivation activities. Interacts (via TPR repeats) with S100 proteins S100A1, S100A2, S100A6, S100B and S100P; the interactions are calcium-dependent, strongly activate PPP5C phosphatase activity and compete with HSP90AA1 and MAP3K5 interactions. Interacts with SMAD2 and SMAD3 but not with SMAD1; decreases SMAD3 phosphorylation and protein levels. Interacts (via TPR repeats) with CRY1 and CRY2; the interaction with CRY2 down-regulates the phosphatase activity on CSNK1E. Interacts (via TPR repeats) with the active form of RAC1, GNA12 or GNA13; these interactions activate the phosphatase activity and translocate PPP5C to the cell membrane. Interacts with FLCN. Mg(2+) is required as a cofactor. Mn(2+) serves as cofactor. In terms of processing, activated by at least two different proteolytic cleavages producing a 56 kDa and a 50 kDa form.

Its subcellular location is the nucleus. The protein localises to the cytoplasm. It is found in the cell membrane. It carries out the reaction O-phospho-L-seryl-[protein] + H2O = L-seryl-[protein] + phosphate. It catalyses the reaction O-phospho-L-threonyl-[protein] + H2O = L-threonyl-[protein] + phosphate. Autoinhibited. In the autoinhibited state, the TPR domain interacts with the catalytic region and prevents substrate access to the catalytic pocket. Allosterically activated by various polyunsaturated fatty acids, free long-chain fatty-acids and long-chain fatty acyl-CoA esters, arachidonic acid being the most effective activator. HSP90A and probably RAC1, GNA12 and GNA13 can also release the autoinhibition by the TPR repeat. Activation by RAC1, GNA12 and GNA13 is synergistic with the one produced by fatty acids binding. Inhibited by okadaic acid. Functionally, serine/threonine-protein phosphatase that dephosphorylates a myriad of proteins involved in different signaling pathways including the kinases CSNK1E, ASK1/MAP3K5, PRKDC and RAF1, the nuclear receptors NR3C1, PPARG, ESR1 and ESR2, SMAD proteins and TAU/MAPT. Implicated in wide ranging cellular processes, including apoptosis, differentiation, DNA damage response, cell survival, regulation of ion channels or circadian rhythms, in response to steroid and thyroid hormones, calcium, fatty acids, TGF-beta as well as oxidative and genotoxic stresses. Participates in the control of DNA damage response mechanisms such as checkpoint activation and DNA damage repair through, for instance, the regulation ATM/ATR-signaling and dephosphorylation of PRKDC and TP53BP1. Inhibits ASK1/MAP3K5-mediated apoptosis induced by oxidative stress. Plays a positive role in adipogenesis, mainly through the dephosphorylation and activation of PPARG transactivation function. Also dephosphorylates and inhibits the anti-adipogenic effect of NR3C1. Regulates the circadian rhythms, through the dephosphorylation and activation of CSNK1E. May modulate TGF-beta signaling pathway by the regulation of SMAD3 phosphorylation and protein expression levels. Dephosphorylates and may play a role in the regulation of TAU/MAPT. Through their dephosphorylation, may play a role in the regulation of ions channels such as KCNH2. Dephosphorylate FNIP1, disrupting interaction with HSP90AA1/Hsp90. The polypeptide is Serine/threonine-protein phosphatase 5 (PPP5C) (Oryctolagus cuniculus (Rabbit)).